Reading from the N-terminus, the 697-residue chain is Protein arginine N-methyltransferase 7 (697 aa).

2 consecutive SAM-dependent MTase PRMT-type domains span residues 14 to 357 (QNTW…YSLW) and 366 to 697 (EQPA…EETK).

It belongs to the class I-like SAM-binding methyltransferase superfamily. Protein arginine N-methyltransferase family. PRMT7 subfamily.

Its function is as follows. Essential arginine methyltransferase that can both catalyze the formation of omega-N monomethylarginine (MMA) and symmetrical dimethylarginine (sDMA). Specifically mediates the symmetrical dimethylation of arginine residues in the small nuclear ribonucleoproteins SmD1 and SmD3. This chain is Protein arginine N-methyltransferase 7 (Art7), found in Drosophila virilis (Fruit fly).